A 352-amino-acid chain; its full sequence is Transcription factor MYB86 (352 aa).

HTH myb-type domains lie at 9 to 61 and 62 to 116; these read KQKL…INYL and RPDL…KKKL. 2 consecutive DNA-binding regions (H-T-H motif) follow at residues 37 to 61 and 89 to 112; these read WSSV…INYL and WSQI…NSCL.

As to expression, expressed in stems, flowers and seeds. Weakly expressed in leaves and roots.

It localises to the nucleus. In terms of biological role, probable transcription factor. This Arabidopsis thaliana (Mouse-ear cress) protein is Transcription factor MYB86 (MYB86).